The chain runs to 365 residues: Cobalt-precorrin-5B C(1)-methyltransferase (365 aa).

It belongs to the CbiD family.

It carries out the reaction Co-precorrin-5B + S-adenosyl-L-methionine = Co-precorrin-6A + S-adenosyl-L-homocysteine. The protein operates within cofactor biosynthesis; adenosylcobalamin biosynthesis; cob(II)yrinate a,c-diamide from sirohydrochlorin (anaerobic route): step 6/10. Catalyzes the methylation of C-1 in cobalt-precorrin-5B to form cobalt-precorrin-6A. In Moorella thermoacetica (strain ATCC 39073 / JCM 9320), this protein is Cobalt-precorrin-5B C(1)-methyltransferase.